Reading from the N-terminus, the 310-residue chain is Ribosomal RNA small subunit methyltransferase H (310 aa).

S-adenosyl-L-methionine-binding positions include 33–35, Asp52, Phe79, Asp98, and Gln105; that span reads GGH.

It belongs to the methyltransferase superfamily. RsmH family.

It localises to the cytoplasm. It carries out the reaction cytidine(1402) in 16S rRNA + S-adenosyl-L-methionine = N(4)-methylcytidine(1402) in 16S rRNA + S-adenosyl-L-homocysteine + H(+). In terms of biological role, specifically methylates the N4 position of cytidine in position 1402 (C1402) of 16S rRNA. The chain is Ribosomal RNA small subunit methyltransferase H from Campylobacter jejuni subsp. doylei (strain ATCC BAA-1458 / RM4099 / 269.97).